The following is a 107-amino-acid chain: UPF0122 protein STH1464 (107 aa).

It belongs to the UPF0122 family.

Functionally, might take part in the signal recognition particle (SRP) pathway. This is inferred from the conservation of its genetic proximity to ftsY/ffh. May be a regulatory protein. The chain is UPF0122 protein STH1464 from Symbiobacterium thermophilum (strain DSM 24528 / JCM 14929 / IAM 14863 / T).